A 395-amino-acid chain; its full sequence is D-alanine--D-alanine ligase (395 aa).

The ATP-grasp domain maps to 172–391 (KVVLGAAGIP…YTELITRLIE (220 aa)). An ATP-binding site is contributed by 204-266 (DAGLTYPLFI…EQGIDGREIE (63 aa)). Mg(2+)-binding residues include aspartate 345, glutamate 358, and asparagine 360.

It belongs to the D-alanine--D-alanine ligase family. Requires Mg(2+) as cofactor. The cofactor is Mn(2+).

It is found in the cytoplasm. It carries out the reaction 2 D-alanine + ATP = D-alanyl-D-alanine + ADP + phosphate + H(+). The protein operates within cell wall biogenesis; peptidoglycan biosynthesis. Cell wall formation. The protein is D-alanine--D-alanine ligase of Bifidobacterium longum subsp. infantis (strain ATCC 15697 / DSM 20088 / JCM 1222 / NCTC 11817 / S12).